The chain runs to 209 residues: Large ribosomal subunit protein bL25 (209 aa).

The tract at residues Ser-185–Glu-209 is disordered. The segment covering Gly-190–Glu-209 has biased composition (acidic residues).

It belongs to the bacterial ribosomal protein bL25 family. CTC subfamily. As to quaternary structure, part of the 50S ribosomal subunit; part of the 5S rRNA/L5/L18/L25 subcomplex. Contacts the 5S rRNA. Binds to the 5S rRNA independently of L5 and L18.

This is one of the proteins that binds to the 5S RNA in the ribosome where it forms part of the central protuberance. In Syntrophomonas wolfei subsp. wolfei (strain DSM 2245B / Goettingen), this protein is Large ribosomal subunit protein bL25.